We begin with the raw amino-acid sequence, 157 residues long: Large ribosomal subunit protein eL29 (157 aa).

Positions 1 to 26 (MAKSKNHTTHNQSRKWHRNGIKKPRS) are enriched in basic residues. The tract at residues 1–32 (MAKSKNHTTHNQSRKWHRNGIKKPRSQRYESL) is disordered. An N6-methyllysine modification is found at Lys-5. The residue at position 31 (Ser-31) is a Phosphoserine. An N6-acetyllysine modification is found at Lys-33. The tract at residues 121–157 (PKAKAKAKDQTKAQAAAPASIPAQAPKGAQATTKATE) is disordered. The segment covering 132–147 (KAQAAAPASIPAQAPK) has biased composition (low complexity). A Phosphoserine modification is found at Ser-140.

It belongs to the eukaryotic ribosomal protein eL29 family. In terms of assembly, component of the large ribosomal subunit.

It is found in the cytoplasm. Functionally, component of the large ribosomal subunit. The ribosome is a large ribonucleoprotein complex responsible for the synthesis of proteins in the cell. The polypeptide is Large ribosomal subunit protein eL29 (RPL29) (Macaca fascicularis (Crab-eating macaque)).